The primary structure comprises 126 residues: Aspartate 1-decarboxylase 1 (126 aa).

Ser-25 serves as the catalytic Schiff-base intermediate with substrate; via pyruvic acid. Residue Ser-25 is modified to Pyruvic acid (Ser). Thr-57 is a binding site for substrate. Tyr-58 functions as the Proton donor in the catalytic mechanism. 73–75 (GSA) is a substrate binding site.

This sequence belongs to the PanD family. As to quaternary structure, heterooctamer of four alpha and four beta subunits. Pyruvate is required as a cofactor. Is synthesized initially as an inactive proenzyme, which is activated by self-cleavage at a specific serine bond to produce a beta-subunit with a hydroxyl group at its C-terminus and an alpha-subunit with a pyruvoyl group at its N-terminus.

It is found in the cytoplasm. The enzyme catalyses L-aspartate + H(+) = beta-alanine + CO2. Its pathway is cofactor biosynthesis; (R)-pantothenate biosynthesis; beta-alanine from L-aspartate: step 1/1. Its function is as follows. Catalyzes the pyruvoyl-dependent decarboxylation of aspartate to produce beta-alanine. In Polaromonas sp. (strain JS666 / ATCC BAA-500), this protein is Aspartate 1-decarboxylase 1.